Here is a 349-residue protein sequence, read N- to C-terminus: Desmethyl-yatein O-methyltransferase (349 aa).

6 residues coordinate S-adenosyl-L-homocysteine: glycine 193, aspartate 216, aspartate 236, methionine 237, methionine 249, and lysine 250. Histidine 254 functions as the Proton acceptor in the catalytic mechanism. Catalysis depends on residues glutamate 282 and glutamate 314.

Belongs to the class I-like SAM-binding methyltransferase superfamily. Cation-independent O-methyltransferase family. COMT subfamily. In terms of assembly, homodimer. Mostly expressed in stems, and, to a lower extent, in leaves.

The enzyme catalyses (-)-5'-demethylyatein + S-adenosyl-L-methionine = (-)-yatein + S-adenosyl-L-homocysteine + H(+). The protein operates within aromatic compound metabolism; phenylpropanoid biosynthesis. Functionally, O-methyltransferase involved in the biosynthesis of etoposide, a chemotherapeutic compound of the topoisomerase inhibitor family. Catalyzes the methylation of (-)-5'-demethylyatein to produce (-)-yatein. The sequence is that of Desmethyl-yatein O-methyltransferase from Sinopodophyllum hexandrum (Himalayan may apple).